Here is a 201-residue protein sequence, read N- to C-terminus: Small ribosomal subunit protein uS4c (201 aa).

Residues 89-151 enclose the S4 RNA-binding domain; it reads MRLDNILFRL…QKSKTLIQNY (63 aa).

Belongs to the universal ribosomal protein uS4 family. Part of the 30S ribosomal subunit. Contacts protein S5. The interaction surface between S4 and S5 is involved in control of translational fidelity.

It is found in the plastid. Its subcellular location is the chloroplast. One of the primary rRNA binding proteins, it binds directly to 16S rRNA where it nucleates assembly of the body of the 30S subunit. Functionally, with S5 and S12 plays an important role in translational accuracy. This is Small ribosomal subunit protein uS4c (rps4) from Phaseolus vulgaris (Kidney bean).